The sequence spans 267 residues: Proteasome subunit alpha (267 aa).

A disordered region spans residues 231–267; that stretch reads ETLLQERDSKESAESEEPIESEEGKKTGKKSDADSSD. Composition is skewed to basic and acidic residues over residues 234–243 and 252–267; these read LQERDSKESA and EEGKKTGKKSDADSSD.

Belongs to the peptidase T1A family. In terms of assembly, the 20S proteasome core is composed of 14 alpha and 14 beta subunits that assemble into four stacked heptameric rings, resulting in a barrel-shaped structure. The two inner rings, each composed of seven catalytic beta subunits, are sandwiched by two outer rings, each composed of seven alpha subunits. The catalytic chamber with the active sites is on the inside of the barrel. Has a gated structure, the ends of the cylinder being occluded by the N-termini of the alpha-subunits. Is capped by the proteasome-associated ATPase, ARC.

It is found in the cytoplasm. It participates in protein degradation; proteasomal Pup-dependent pathway. The formation of the proteasomal ATPase ARC-20S proteasome complex, likely via the docking of the C-termini of ARC into the intersubunit pockets in the alpha-rings, may trigger opening of the gate for substrate entry. Interconversion between the open-gate and close-gate conformations leads to a dynamic regulation of the 20S proteasome proteolysis activity. Component of the proteasome core, a large protease complex with broad specificity involved in protein degradation. In Mycobacterium ulcerans (strain Agy99), this protein is Proteasome subunit alpha.